The following is a 351-amino-acid chain: Signal recognition particle receptor FtsY (351 aa).

GTP is bound by residues 152–159 (GVNGSGKT), 235–239 (DTAGR), and 299–302 (TKMD).

This sequence belongs to the GTP-binding SRP family. FtsY subfamily. As to quaternary structure, part of the signal recognition particle protein translocation system, which is composed of SRP and FtsY.

It localises to the cell membrane. Its subcellular location is the cytoplasm. The enzyme catalyses GTP + H2O = GDP + phosphate + H(+). In terms of biological role, involved in targeting and insertion of nascent membrane proteins into the cytoplasmic membrane. Acts as a receptor for the complex formed by the signal recognition particle (SRP) and the ribosome-nascent chain (RNC). This chain is Signal recognition particle receptor FtsY, found in Metamycoplasma hominis (strain ATCC 23114 / DSM 25592 / NBRC 14850 / NCTC 10111 / PG21) (Mycoplasma hominis).